We begin with the raw amino-acid sequence, 231 residues long: 7-cyano-7-deazaguanine synthase (231 aa).

ATP is bound at residue 8–18 (FSGGQDSTTCL). Residues Cys-188, Cys-197, Cys-200, and Cys-203 each coordinate Zn(2+).

The protein belongs to the QueC family. Zn(2+) is required as a cofactor.

The enzyme catalyses 7-carboxy-7-deazaguanine + NH4(+) + ATP = 7-cyano-7-deazaguanine + ADP + phosphate + H2O + H(+). It functions in the pathway purine metabolism; 7-cyano-7-deazaguanine biosynthesis. Its function is as follows. Catalyzes the ATP-dependent conversion of 7-carboxy-7-deazaguanine (CDG) to 7-cyano-7-deazaguanine (preQ(0)). The chain is 7-cyano-7-deazaguanine synthase from Escherichia coli O1:K1 / APEC.